A 390-amino-acid chain; its full sequence is DNA polymerase IV (390 aa).

Residues 6-187 (VMHVDLDAFF…LDIAVMPGIG (182 aa)) enclose the UmuC domain. Residues Asp-10 and Asp-105 each contribute to the Mg(2+) site. Glu-106 is a catalytic residue.

Belongs to the DNA polymerase type-Y family. In terms of assembly, monomer. Mg(2+) serves as cofactor.

It is found in the cytoplasm. It carries out the reaction DNA(n) + a 2'-deoxyribonucleoside 5'-triphosphate = DNA(n+1) + diphosphate. Its function is as follows. Poorly processive, error-prone DNA polymerase involved in untargeted mutagenesis. Copies undamaged DNA at stalled replication forks, which arise in vivo from mismatched or misaligned primer ends. These misaligned primers can be extended by PolIV. Exhibits no 3'-5' exonuclease (proofreading) activity. May be involved in translesional synthesis, in conjunction with the beta clamp from PolIII. This is DNA polymerase IV from Dehalococcoides mccartyi (strain ATCC BAA-2100 / JCM 16839 / KCTC 5957 / BAV1).